A 450-amino-acid polypeptide reads, in one-letter code: tRNA modification GTPase MnmE (450 aa).

(6S)-5-formyl-5,6,7,8-tetrahydrofolate is bound by residues arginine 25, glutamate 86, and arginine 126. In terms of domain architecture, TrmE-type G spans 221–373 (GLRVALVGRP…LVQALLERCG (153 aa)). Asparagine 231 serves as a coordination point for K(+). GTP-binding positions include 231-236 (NVGKSS), 250-256 (TELPGTT), 275-278 (DTAG), and 336-339 (NKAD). Serine 235 serves as a coordination point for Mg(2+). Residues threonine 250, leucine 252, and threonine 255 each coordinate K(+). Threonine 256 is a binding site for Mg(2+). A (6S)-5-formyl-5,6,7,8-tetrahydrofolate-binding site is contributed by lysine 450.

The protein belongs to the TRAFAC class TrmE-Era-EngA-EngB-Septin-like GTPase superfamily. TrmE GTPase family. Homodimer. Heterotetramer of two MnmE and two MnmG subunits. It depends on K(+) as a cofactor.

It is found in the cytoplasm. Exhibits a very high intrinsic GTPase hydrolysis rate. Involved in the addition of a carboxymethylaminomethyl (cmnm) group at the wobble position (U34) of certain tRNAs, forming tRNA-cmnm(5)s(2)U34. This is tRNA modification GTPase MnmE from Parasynechococcus marenigrum (strain WH8102).